The sequence spans 444 residues: Maintenance of mitochondrial morphology protein 1 (444 aa).

Residues 1–16 (MKGVENTLSQSESVNR) show a composition bias toward polar residues. Positions 1 to 20 (MKGVENTLSQSESVNRGYNG) are disordered. Residues 1–107 (MKGVENTLSQ…TFSSRSFAEG (107 aa)) lie on the Lumenal side of the membrane. A helical transmembrane segment spans residues 108-128 (LVVGQLSVIVVLIFFIKFFIF). Residues 129-444 (SDGPAKTGGG…QEEDPSRAPE (316 aa)) are Cytoplasmic-facing. The disordered stretch occupies residues 136–157 (GGGGGSSAESRSSGFTGSPLTS). The span at 142-157 (SAESRSSGFTGSPLTS) shows a compositional bias: low complexity. Residues 204–418 (SPESLDWFNV…EPRFQFVKLP (215 aa)) enclose the SMP-LTD domain. The segment at 425–444 (KNTREEKSDMQEEDPSRAPE) is disordered. Residues 426-444 (NTREEKSDMQEEDPSRAPE) show a composition bias toward basic and acidic residues.

Belongs to the MMM1 family. Homodimer. Component of the ER-mitochondria encounter structure (ERMES) or MDM complex, composed of MMM1, MDM10, MDM12 and MDM34. An MMM1 homodimer associates with one molecule of MDM12 on each side in a pairwise head-to-tail manner, and the SMP-LTD domains of MMM1 and MDM12 generate a continuous hydrophobic tunnel for phospholipid trafficking.

It localises to the endoplasmic reticulum membrane. Functionally, component of the ERMES/MDM complex, which serves as a molecular tether to connect the endoplasmic reticulum (ER) and mitochondria. Components of this complex are involved in the control of mitochondrial shape and protein biogenesis, and function in nonvesicular lipid trafficking between the ER and mitochondria. The MDM12-MMM1 subcomplex functions in the major beta-barrel assembly pathway that is responsible for biogenesis of all outer membrane beta-barrel proteins, and acts in a late step after the SAM complex. The MDM10-MDM12-MMM1 subcomplex further acts in the TOM40-specific pathway after the action of the MDM12-MMM1 complex. Essential for establishing and maintaining the structure of mitochondria and maintenance of mtDNA nucleoids. In Eremothecium gossypii (strain ATCC 10895 / CBS 109.51 / FGSC 9923 / NRRL Y-1056) (Yeast), this protein is Maintenance of mitochondrial morphology protein 1.